We begin with the raw amino-acid sequence, 317 residues long: Carbonic anhydrase 5B, mitochondrial (317 aa).

Residues 1–33 (MTVMSHLRVSLQVSSCTLLWRRFRVPRLVPLRS) constitute a mitochondrion transit peptide. Residues 37–296 (YTCTYRTRNR…LMNRTVRSSF (260 aa)) enclose the Alpha-carbonic anhydrase domain. The Zn(2+) site is built by His130, His132, and His155. Substrate is bound at residue 235–236 (TT).

It belongs to the alpha-carbonic anhydrase family. The cofactor is Zn(2+).

It is found in the mitochondrion. It carries out the reaction hydrogencarbonate + H(+) = CO2 + H2O. In terms of biological role, mitochondrial carbonic anhydrase that catalyzes the reversible conversion of carbon dioxide to bicarbonate/HCO3. The protein is Carbonic anhydrase 5B, mitochondrial (Ca5b) of Rattus norvegicus (Rat).